The following is a 53-amino-acid chain: VSVDCSEYPKPGCMMERLPLCGSDNKTYNDKCNFCNAVVESNGTLTLNHFGEC.

The Kazal-like domain occupies Val-3–Cys-53. Cystine bridges form between Cys-5/Cys-35, Cys-13/Cys-32, and Cys-21/Cys-53. An N-linked (GlcNAc...) asparagine glycan is attached at Asn-42.

It localises to the secreted. The sequence is that of Ovomucoid from Turnix sylvaticus (Common buttonquail).